A 219-amino-acid chain; its full sequence is Proteasome subunit beta (219 aa).

The propeptide at 1-14 is removed in mature form; by autocatalysis; it reads MISNSEYHKEYMKG. The Nucleophile role is filled by Thr15.

Belongs to the peptidase T1B family. In terms of assembly, the 20S proteasome core is composed of 14 alpha and 14 beta subunits that assemble into four stacked heptameric rings, resulting in a barrel-shaped structure. The two inner rings, each composed of seven catalytic beta subunits, are sandwiched by two outer rings, each composed of seven alpha subunits. The catalytic chamber with the active sites is on the inside of the barrel. Has a gated structure, the ends of the cylinder being occluded by the N-termini of the alpha-subunits. Is capped at one or both ends by the proteasome regulatory ATPase, PAN.

It is found in the cytoplasm. It carries out the reaction Cleavage of peptide bonds with very broad specificity.. With respect to regulation, the formation of the proteasomal ATPase PAN-20S proteasome complex, via the docking of the C-termini of PAN into the intersubunit pockets in the alpha-rings, triggers opening of the gate for substrate entry. Interconversion between the open-gate and close-gate conformations leads to a dynamic regulation of the 20S proteasome proteolysis activity. Component of the proteasome core, a large protease complex with broad specificity involved in protein degradation. This Methanococcus maripaludis (strain C6 / ATCC BAA-1332) protein is Proteasome subunit beta.